The chain runs to 130 residues: Small ribosomal subunit protein uS8 (130 aa).

The protein belongs to the universal ribosomal protein uS8 family. Part of the 30S ribosomal subunit. Contacts proteins S5 and S12.

Functionally, one of the primary rRNA binding proteins, it binds directly to 16S rRNA central domain where it helps coordinate assembly of the platform of the 30S subunit. The protein is Small ribosomal subunit protein uS8 of Pseudoalteromonas translucida (strain TAC 125).